A 246-amino-acid chain; its full sequence is Ubiquinone biosynthesis O-methyltransferase (246 aa).

Arg36, Gly60, Asp81, and Leu123 together coordinate S-adenosyl-L-methionine.

It belongs to the methyltransferase superfamily. UbiG/COQ3 family.

It catalyses the reaction a 3-demethylubiquinol + S-adenosyl-L-methionine = a ubiquinol + S-adenosyl-L-homocysteine + H(+). It carries out the reaction a 3-(all-trans-polyprenyl)benzene-1,2-diol + S-adenosyl-L-methionine = a 2-methoxy-6-(all-trans-polyprenyl)phenol + S-adenosyl-L-homocysteine + H(+). The protein operates within cofactor biosynthesis; ubiquinone biosynthesis. Its function is as follows. O-methyltransferase that catalyzes the 2 O-methylation steps in the ubiquinone biosynthetic pathway. This chain is Ubiquinone biosynthesis O-methyltransferase, found in Rickettsia typhi (strain ATCC VR-144 / Wilmington).